The chain runs to 299 residues: Urease accessory protein UreD (299 aa).

The protein belongs to the UreD family. As to quaternary structure, ureD, UreF and UreG form a complex that acts as a GTP-hydrolysis-dependent molecular chaperone, activating the urease apoprotein by helping to assemble the nickel containing metallocenter of UreC. The UreE protein probably delivers the nickel.

It is found in the cytoplasm. Functionally, required for maturation of urease via the functional incorporation of the urease nickel metallocenter. This is Urease accessory protein UreD from Prochlorococcus marinus (strain MIT 9303).